A 307-amino-acid chain; its full sequence is MSQFNNTNIIENTPINKMHQKKSNILDIFTLDNIRTNHSSDKVFFKITSDKPLSTDKLGQHFDNTYHTGLNICSIPFETKGSCVDGGIYFTDKDNILKFLFYGIYLRKVDLPLDDPGFIMVKDPDSCASSVKWRASRVILGNRLNLRDISTFKYLMSLGVDINVDNDKPLRWAASRGYYGLVKFLLDNGANVHAYDDEAVQLASRNGYLNVVKILVEYGANVNANNDYAIQMACKYGYNEIVRFLVFNGANPMANRYYPIEIATEFGNKLIVRFLLHQDKSMVYKSYAMDIAVRNENWDLLNVLLLD.

ANK repeat units follow at residues 135–164, 165–194, 196–224, 226–254, 256–284, and 286–307; these read ASRVILGNRLNLRDISTFKYLMSLGVDINV, DNDKPLRWAASRGYYGLVKFLLDNGANVHA, DDEAVQLASRNGYLNVVKILVEYGANVNA, NDYAIQMACKYGYNEIVRFLVFNGANPMA, RYYPIEIATEFGNKLIVRFLLHQDKSMVY, and SYAMDIAVRNENWDLLNVLLLD.

The chain is Putative ankyrin repeat protein R229 from Acanthamoeba polyphaga (Amoeba).